Here is a 330-residue protein sequence, read N- to C-terminus: Lipoyl synthase (330 aa).

A disordered region spans residues 1 to 31 (MSDAPIATSSEVTQSPADYDPTKKQKSAEKT). The span at 7 to 16 (ATSSEVTQSP) shows a compositional bias: polar residues. Basic and acidic residues predominate over residues 20-31 (DPTKKQKSAEKT). [4Fe-4S] cluster contacts are provided by Cys77, Cys82, Cys88, Cys103, Cys107, Cys110, and Ser317. A Radical SAM core domain is found at 88-306 (CFGKGTATFM…EEEAYKMGFT (219 aa)).

The protein belongs to the radical SAM superfamily. Lipoyl synthase family. Requires [4Fe-4S] cluster as cofactor.

The protein localises to the cytoplasm. The catalysed reaction is [[Fe-S] cluster scaffold protein carrying a second [4Fe-4S](2+) cluster] + N(6)-octanoyl-L-lysyl-[protein] + 2 oxidized [2Fe-2S]-[ferredoxin] + 2 S-adenosyl-L-methionine + 4 H(+) = [[Fe-S] cluster scaffold protein] + N(6)-[(R)-dihydrolipoyl]-L-lysyl-[protein] + 4 Fe(3+) + 2 hydrogen sulfide + 2 5'-deoxyadenosine + 2 L-methionine + 2 reduced [2Fe-2S]-[ferredoxin]. It participates in protein modification; protein lipoylation via endogenous pathway; protein N(6)-(lipoyl)lysine from octanoyl-[acyl-carrier-protein]: step 2/2. Functionally, catalyzes the radical-mediated insertion of two sulfur atoms into the C-6 and C-8 positions of the octanoyl moiety bound to the lipoyl domains of lipoate-dependent enzymes, thereby converting the octanoylated domains into lipoylated derivatives. The polypeptide is Lipoyl synthase (Cupriavidus metallidurans (strain ATCC 43123 / DSM 2839 / NBRC 102507 / CH34) (Ralstonia metallidurans)).